Reading from the N-terminus, the 558-residue chain is CTP synthase (558 aa).

The segment at 1-271 (MAARQQTKHL…DAYVVRRLGL (271 aa)) is amidoligase domain. Serine 18 contacts CTP. Residue serine 18 coordinates UTP. ATP contacts are provided by residues 19 to 24 (SLGKGL) and aspartate 76. Mg(2+)-binding residues include aspartate 76 and glutamate 145. Residues 152 to 154 (DIE), 192 to 197 (KTKPTQ), and lysine 228 each bind CTP. UTP is bound by residues 192–197 (KTKPTQ) and lysine 228. In terms of domain architecture, Glutamine amidotransferase type-1 spans 296 to 545 (TIALVGKYVD…IRAALLHRCP (250 aa)). An L-glutamine-binding site is contributed by glycine 359. Catalysis depends on cysteine 386, which acts as the Nucleophile; for glutamine hydrolysis. L-glutamine-binding positions include 387–390 (LGLQ), glutamate 410, and arginine 471. Active-site residues include histidine 518 and glutamate 520.

It belongs to the CTP synthase family. In terms of assembly, homotetramer.

It catalyses the reaction UTP + L-glutamine + ATP + H2O = CTP + L-glutamate + ADP + phosphate + 2 H(+). The catalysed reaction is L-glutamine + H2O = L-glutamate + NH4(+). The enzyme catalyses UTP + NH4(+) + ATP = CTP + ADP + phosphate + 2 H(+). It functions in the pathway pyrimidine metabolism; CTP biosynthesis via de novo pathway; CTP from UDP: step 2/2. Its activity is regulated as follows. Allosterically activated by GTP, when glutamine is the substrate; GTP has no effect on the reaction when ammonia is the substrate. The allosteric effector GTP functions by stabilizing the protein conformation that binds the tetrahedral intermediate(s) formed during glutamine hydrolysis. Inhibited by the product CTP, via allosteric rather than competitive inhibition. In terms of biological role, catalyzes the ATP-dependent amination of UTP to CTP with either L-glutamine or ammonia as the source of nitrogen. Regulates intracellular CTP levels through interactions with the four ribonucleotide triphosphates. In Acidothermus cellulolyticus (strain ATCC 43068 / DSM 8971 / 11B), this protein is CTP synthase.